Here is a 273-residue protein sequence, read N- to C-terminus: Kit ligand (273 aa).

The signal sequence occupies residues 1–25 (MKKTQTWIITCIYLQLLLFNPLVKT). At Gln26 the chain carries Pyrrolidone carboxylic acid. At 26–214 (QEICRNPVTD…AKSPEDPGLQ (189 aa)) the chain is on the extracellular side. Cystine bridges form between Cys29/Cys114 and Cys68/Cys163. Residue Asn90 is glycosylated (N-linked (GlcNAc...) asparagine; partial). A glycan (N-linked (GlcNAc...) asparagine) is linked at Asn145. O-linked (GalNAc...) serine glycosylation occurs at Ser167. O-linked (GalNAc...) threonine glycans are attached at residues Thr168 and Thr180. The interval 190 to 211 (ASSLRNDSSSSNRKAAKSPEDP) is disordered. Residues 191–202 (SSLRNDSSSSNR) show a composition bias toward low complexity. N-linked (GlcNAc...) asparagine glycosylation is present at Asn195. The chain crosses the membrane as a helical span at residues 215–237 (WTAMALPALISLVIGFAFGALYW). Topologically, residues 238–273 (KKKQSSLTRAVENIQINEEDNEISMLQQKEREFQEV) are cytoplasmic.

The protein belongs to the SCF family. As to quaternary structure, homodimer, non-covalently linked. Heterotetramer with KIT, binding two KIT molecules; thereby mediates KIT dimerization and subsequent activation by autophosphorylation. A soluble form is produced by proteolytic processing of isoform 1 in the extracellular domain. Post-translationally, the identity of N- and O-linked saccharides is not reported in PubMed:1708771. The O-linked polysaccharides are probably the mucin type linked to GalNAc.

It is found in the cell membrane. Its subcellular location is the cytoplasm. The protein resides in the cytoskeleton. It localises to the cell projection. The protein localises to the lamellipodium. It is found in the filopodium. Its subcellular location is the secreted. In terms of biological role, ligand for the receptor-type protein-tyrosine kinase KIT. Plays an essential role in the regulation of cell survival and proliferation, hematopoiesis, stem cell maintenance, gametogenesis, mast cell development, migration and function, and in melanogenesis. KITLG/SCF binding can activate several signaling pathways. Promotes phosphorylation of PIK3R1, the regulatory subunit of phosphatidylinositol 3-kinase, and subsequent activation of the kinase AKT1. KITLG/SCF and KIT also transmit signals via GRB2 and activation of RAS, RAF1 and the MAP kinases MAPK1/ERK2 and/or MAPK3/ERK1. KITLG/SCF and KIT promote activation of STAT family members STAT1, STAT3 and STAT5. KITLG/SCF and KIT promote activation of PLCG1, leading to the production of the cellular signaling molecules diacylglycerol and inositol 1,4,5-trisphosphate. KITLG/SCF acts synergistically with other cytokines, probably interleukins. This Rattus norvegicus (Rat) protein is Kit ligand (Kitlg).